A 1142-amino-acid chain; its full sequence is GPI inositol-deacylase (1142 aa).

The segment at 24 to 59 (GFYKRNNANTASNDEKPNLEQNDIPSVTSSGSSTPS) is disordered. Over residues 47–59 (IPSVTSSGSSTPS) the composition is skewed to low complexity. Residues 81 to 101 (SWSLYVAIIAILLLLVILHSF) traverse the membrane as a helical segment. The active site involves Ser-264. Asn-596 and Asn-679 each carry an N-linked (GlcNAc...) asparagine glycan. Transmembrane regions (helical) follow at residues 741–761 (LLAS…FRYF), 781–801 (GLIK…YLIS), 849–869 (LLTL…LCVM), and 946–966 (IIGI…QLVY). N-linked (GlcNAc...) asparagine glycosylation is present at Asn-1002. Residues 1006-1026 (TITILMLLLAPLDFPVLIVWA) form a helical membrane-spanning segment. N-linked (GlcNAc...) asparagine glycosylation occurs at Asn-1028. Helical transmembrane passes span 1035-1055 (IPFP…LTEI), 1075-1095 (VFLF…PYLI), and 1097-1117 (NVVG…GFFV). Asn-1119 carries an N-linked (GlcNAc...) asparagine glycan.

It belongs to the GPI inositol-deacylase family.

It is found in the endoplasmic reticulum membrane. Functionally, involved in inositol deacylation of GPI-anchored proteins which plays important roles in the quality control and ER-associated degradation of GPI-anchored proteins. In Schizosaccharomyces pombe (strain 972 / ATCC 24843) (Fission yeast), this protein is GPI inositol-deacylase (bst1).